The chain runs to 110 residues: UPF0060 membrane protein Rpic_4131 (110 aa).

4 helical membrane passes run 8–28 (VLFAFTAVAEIVGCYLPWLVL), 33–53 (PFWLLLPAAASLALFAWLLTL), 65–85 (YGGVYIAVALVWLRLVDGVAL), and 88–108 (WDVGGAAIALTGMAVIALQPQ).

It belongs to the UPF0060 family.

It localises to the cell inner membrane. The protein is UPF0060 membrane protein Rpic_4131 of Ralstonia pickettii (strain 12J).